We begin with the raw amino-acid sequence, 555 residues long: Polypyrimidine tract-binding protein 1 (555 aa).

Residue methionine 1 is modified to N-acetylmethionine. Serine 16 is modified (phosphoserine). RRM domains lie at 58–142, 183–259, and 361–412; these read RVIH…SSPN, LRII…FSKL, and SVLL…SQAQ. Residue lysine 64 forms a Glycyl lysine isopeptide (Lys-Gly) (interchain with G-Cter in SUMO2) linkage. At tyrosine 126 the chain carries Phosphotyrosine. The residue at position 137 (threonine 137) is a Phosphothreonine. Serine 140 carries the post-translational modification Phosphoserine. A Glycyl lysine isopeptide (Lys-Gly) (interchain with G-Cter in SUMO2) cross-link involves residue lysine 217. A disordered region spans residues 435 to 457; sequence HQSVQLPREGQEDQGLTKDYGSS. A Phosphoserine modification is found at serine 457. The RRM 4 domain occupies 478 to 553; sequence ATLHLSNIPP…HHLRVSFSKS (76 aa).

Monomer. Part of a ternary complex containing KHSRP, PTBP1, PTBP2 and HNRPH1. Interacts with SFPQ. Interacts with RAVER1. Interacts with IVNS1ABP (via BACK domain); the interaction is direct. Expressed in myoblast; expression gradually decreases during muscle cell differentiation (at protein level).

It localises to the nucleus. Functionally, plays a role in pre-mRNA splicing and in the regulation of alternative splicing events. Activates exon skipping of its own pre-mRNA during muscle cell differentiation. Binds to the polypyrimidine tract of introns. May promote RNA looping when bound to two separate polypyrimidine tracts in the same pre-mRNA. May promote the binding of U2 snRNP to pre-mRNA. Cooperates with RAVER1 to modulate switching between mutually exclusive exons during maturation of the TPM1 pre-mRNA. Represses the splicing of MAPT/Tau exon 10. Binds to polypyrimidine-rich controlling element (PCE) of CFTR and promotes exon skipping of CFTR exon 9, thereby antagonizing TIA1 and its role in exon inclusion of CFTR exon 9. Plays a role in the splicing of pyruvate kinase PKM by binding repressively to a polypyrimidine tract flanking PKM exon 9, inhibiting exon 9 inclusion and resulting in exon 10 inclusion and production of the PKM M2 isoform. The protein is Polypyrimidine tract-binding protein 1 (Ptbp1) of Mus musculus (Mouse).